The following is a 355-amino-acid chain: UDP-3-O-acylglucosamine N-acyltransferase (355 aa).

The Proton acceptor role is filled by histidine 248.

The protein belongs to the transferase hexapeptide repeat family. LpxD subfamily. Homotrimer.

The catalysed reaction is a UDP-3-O-[(3R)-3-hydroxyacyl]-alpha-D-glucosamine + a (3R)-hydroxyacyl-[ACP] = a UDP-2-N,3-O-bis[(3R)-3-hydroxyacyl]-alpha-D-glucosamine + holo-[ACP] + H(+). The protein operates within bacterial outer membrane biogenesis; LPS lipid A biosynthesis. Its function is as follows. Catalyzes the N-acylation of UDP-3-O-acylglucosamine using 3-hydroxyacyl-ACP as the acyl donor. Is involved in the biosynthesis of lipid A, a phosphorylated glycolipid that anchors the lipopolysaccharide to the outer membrane of the cell. The polypeptide is UDP-3-O-acylglucosamine N-acyltransferase (Synechococcus elongatus (strain ATCC 33912 / PCC 7942 / FACHB-805) (Anacystis nidulans R2)).